A 119-amino-acid chain; its full sequence is Ribonuclease P protein component (119 aa).

Belongs to the RnpA family. In terms of assembly, consists of a catalytic RNA component (M1 or rnpB) and a protein subunit.

It carries out the reaction Endonucleolytic cleavage of RNA, removing 5'-extranucleotides from tRNA precursor.. Its function is as follows. RNaseP catalyzes the removal of the 5'-leader sequence from pre-tRNA to produce the mature 5'-terminus. It can also cleave other RNA substrates such as 4.5S RNA. The protein component plays an auxiliary but essential role in vivo by binding to the 5'-leader sequence and broadening the substrate specificity of the ribozyme. In Beutenbergia cavernae (strain ATCC BAA-8 / DSM 12333 / CCUG 43141 / JCM 11478 / NBRC 16432 / NCIMB 13614 / HKI 0122), this protein is Ribonuclease P protein component.